The chain runs to 306 residues: Curved DNA-binding protein (306 aa).

The J domain maps to 5-69; that stretch reads DYYAIMGVKP…QRRAEYDQMW (65 aa).

It is found in the cytoplasm. Its subcellular location is the nucleoid. Its function is as follows. DNA-binding protein that preferentially recognizes a curved DNA sequence. It is probably a functional analog of DnaJ; displays overlapping activities with DnaJ, but functions under different conditions, probably acting as a molecular chaperone in an adaptive response to environmental stresses other than heat shock. Lacks autonomous chaperone activity; binds native substrates and targets them for recognition by DnaK. Its activity is inhibited by the binding of CbpM. In Escherichia coli O8 (strain IAI1), this protein is Curved DNA-binding protein.